Reading from the N-terminus, the 397-residue chain is Tryptophan synthase beta chain (397 aa).

At Lys88 the chain carries N6-(pyridoxal phosphate)lysine.

Belongs to the TrpB family. Tetramer of two alpha and two beta chains. Pyridoxal 5'-phosphate is required as a cofactor.

It catalyses the reaction (1S,2R)-1-C-(indol-3-yl)glycerol 3-phosphate + L-serine = D-glyceraldehyde 3-phosphate + L-tryptophan + H2O. It participates in amino-acid biosynthesis; L-tryptophan biosynthesis; L-tryptophan from chorismate: step 5/5. Functionally, the beta subunit is responsible for the synthesis of L-tryptophan from indole and L-serine. In Haemophilus influenzae (strain PittEE), this protein is Tryptophan synthase beta chain.